Here is a 343-residue protein sequence, read N- to C-terminus: Protein RecA (343 aa).

64-71 is a binding site for ATP; it reads GPESSGKT.

It belongs to the RecA family.

It is found in the cytoplasm. In terms of biological role, can catalyze the hydrolysis of ATP in the presence of single-stranded DNA, the ATP-dependent uptake of single-stranded DNA by duplex DNA, and the ATP-dependent hybridization of homologous single-stranded DNAs. It interacts with LexA causing its activation and leading to its autocatalytic cleavage. The chain is Protein RecA from Bacillus mycoides (strain KBAB4) (Bacillus weihenstephanensis).